The chain runs to 201 residues: MWLPPALLLLSLSGCFSIQGPESVRAPEQGSLTVQCHYKQGWETYIKWWCRGVRWDTCKILIETRGSEQGEKSDRVSIKDNQKDRTFTVTMEGLRRDDADVYWCGIERRGPDLGTQVKVIVDPEGAASTTASSPTNSNMAVFIGSHKRNHYMLLVFVKVPILLILVTAILWLKGSQRVPEEPGEQPIYMNFSEPLTKDMAT.

An N-terminal signal peptide occupies residues Met-1–Ser-17. One can recognise an Ig-like V-type domain in the interval Ile-18–Ile-120. Residues Ile-18–Tyr-151 lie on the Extracellular side of the membrane. Cys-36 and Cys-104 are joined by a disulfide. The chain crosses the membrane as a helical span at residues Met-152–Leu-172. The Cytoplasmic segment spans residues Lys-173 to Thr-201. At Tyr-188 the chain carries Phosphotyrosine; by FYN.

The protein belongs to the CD300 family. In terms of assembly, interacts with TYROBP, which enhances cell surface expression and activation properties. Interacts with GRB2 in the presence of FYN. Post-translationally, phosphorylation on Tyr-188 by FYN is required for interaction with GRB2. As to expression, expressed exclusively in myeloid lineages.

It localises to the cell membrane. Functionally, acts as an activating immune receptor through its interaction with ITAM-bearing adapter TYROBP, and also independently by recruitment of GRB2. The chain is CMRF35-like molecule 7 (CD300LB) from Homo sapiens (Human).